We begin with the raw amino-acid sequence, 460 residues long: Chromosomal replication initiator protein DnaA (460 aa).

Positions 1-73 (MEISIDSLWS…ANVVQSILGH (73 aa)) are domain I, interacts with DnaA modulators. The tract at residues 73-116 (HPVEIYITVAKGEEFEEIGGGGAWELPTTNSIYETPNQNRQPNT) is domain II. The tract at residues 117–333 (ELNAKYVFSR…GALTRALAYI (217 aa)) is domain III, AAA+ region. 4 residues coordinate ATP: Gly-161, Gly-163, Lys-164, and Thr-165. Residues 334 to 460 (SIWGLPMTVA…MNSRSRKPSL (127 aa)) form a domain IV, binds dsDNA region.

Belongs to the DnaA family. In terms of assembly, oligomerizes as a right-handed, spiral filament on DNA at oriC.

The protein resides in the cytoplasm. Its function is as follows. Plays an essential role in the initiation and regulation of chromosomal replication. ATP-DnaA binds to the origin of replication (oriC) to initiate formation of the DNA replication initiation complex once per cell cycle. Binds the DnaA box (a 9 base pair repeat at the origin) and separates the double-stranded (ds)DNA. Forms a right-handed helical filament on oriC DNA; dsDNA binds to the exterior of the filament while single-stranded (ss)DNA is stabiized in the filament's interior. The ATP-DnaA-oriC complex binds and stabilizes one strand of the AT-rich DNA unwinding element (DUE), permitting loading of DNA polymerase. After initiation quickly degrades to an ADP-DnaA complex that is not apt for DNA replication. Binds acidic phospholipids. This chain is Chromosomal replication initiator protein DnaA, found in Trichormus variabilis (strain ATCC 29413 / PCC 7937) (Anabaena variabilis).